Here is a 286-residue protein sequence, read N- to C-terminus: Ribosomal RNA small subunit methyltransferase A (286 aa).

6 residues coordinate S-adenosyl-L-methionine: N28, L30, G55, E77, D103, and N123.

It belongs to the class I-like SAM-binding methyltransferase superfamily. rRNA adenine N(6)-methyltransferase family. RsmA subfamily.

It is found in the cytoplasm. The enzyme catalyses adenosine(1518)/adenosine(1519) in 16S rRNA + 4 S-adenosyl-L-methionine = N(6)-dimethyladenosine(1518)/N(6)-dimethyladenosine(1519) in 16S rRNA + 4 S-adenosyl-L-homocysteine + 4 H(+). Specifically dimethylates two adjacent adenosines (A1518 and A1519) in the loop of a conserved hairpin near the 3'-end of 16S rRNA in the 30S particle. May play a critical role in biogenesis of 30S subunits. In Rhodopseudomonas palustris (strain BisB18), this protein is Ribosomal RNA small subunit methyltransferase A.